A 281-amino-acid polypeptide reads, in one-letter code: Survival motor neuron protein 1 (281 aa).

Disordered regions lie at residues M1–S20 and A42–P77. T14 is modified (phosphothreonine). S17 and S20 each carry phosphoserine. Basic residues predominate over residues K59 to C73. A Tudor domain is found at E80 to D140. Over residues A145–R159 the composition is skewed to basic and acidic residues. The segment at A145–D242 is disordered. 2 stretches are compositionally biased toward pro residues: residues M179 to P197 and P212 to S235. The interval P225 to W252 is P2 (binding site for SNRPB). Residues G264–H279 form a required for interaction with SYNCRIP region.

Belongs to the SMN family. As to quaternary structure, homodimer. Component of an import snRNP complex composed of kpnb1, rnut1, smn1 and znf259. Part of the core SMN complex that contains smn1, gemin2/sip1, ddx20/gemin3, gemin4, gemin5, gemin6, gemin7, gemin8 and strap/unrip. Interacts with ddx20, fbl, nola1, rnut1, syncrip and with several spliceosomal snRNP core Sm proteins, including snrpb, snrpd1, snrpd2, snrpd3, snrpe and ilf3. Interacts with elavl4.

The protein resides in the nucleus. Its subcellular location is the gem. It localises to the cajal body. It is found in the cytoplasm. The protein localises to the cytoplasmic granule. The protein resides in the perikaryon. Its subcellular location is the cell projection. It localises to the neuron projection. It is found in the myofibril. The protein localises to the sarcomere. The protein resides in the z line. Functionally, the SMN complex plays an essential role in spliceosomal snRNP assembly in the cytoplasm and is required for pre-mRNA splicing in the nucleus. It may also play a role in the metabolism of snoRNPs. Required in motor neurons and proprioceptive neurons to ensure correct U12 intron splicing and proper levels of tmem41b mRNA. Required for the maturation of motor neuron axonal branches and dendrites. The protein is Survival motor neuron protein 1 (smn1) of Danio rerio (Zebrafish).